Here is a 158-residue protein sequence, read N- to C-terminus: Endoribonuclease YbeY (158 aa).

Zn(2+) contacts are provided by His117, His121, and His127.

Belongs to the endoribonuclease YbeY family. Zn(2+) serves as cofactor.

Its subcellular location is the cytoplasm. Functionally, single strand-specific metallo-endoribonuclease involved in late-stage 70S ribosome quality control and in maturation of the 3' terminus of the 16S rRNA. This is Endoribonuclease YbeY from Francisella philomiragia subsp. philomiragia (strain ATCC 25017 / CCUG 19701 / FSC 153 / O#319-036).